Consider the following 153-residue polypeptide: Deoxyuridine 5'-triphosphate nucleotidohydrolase (153 aa).

Residues 71–73 (RSG), N84, 88–90 (TID), and K98 contribute to the substrate site.

The protein belongs to the dUTPase family. Mg(2+) serves as cofactor.

The catalysed reaction is dUTP + H2O = dUMP + diphosphate + H(+). The protein operates within pyrimidine metabolism; dUMP biosynthesis; dUMP from dCTP (dUTP route): step 2/2. This enzyme is involved in nucleotide metabolism: it produces dUMP, the immediate precursor of thymidine nucleotides and it decreases the intracellular concentration of dUTP so that uracil cannot be incorporated into DNA. In Ehrlichia canis (strain Jake), this protein is Deoxyuridine 5'-triphosphate nucleotidohydrolase.